Here is a 256-residue protein sequence, read N- to C-terminus: MEGITHPIPRTVEEVFSDFRGRRAGLIKALTNDMVKFYQTCDPEKENLCLYGLPNETWEVNLPVEEVPPELPEPALGINFARDGMQEKDWVSLVAVHSDSWLLSVAFYFGARFGFGKNERKRLFQMINELPTIFEVVSGNAKQSKDLSVNNNNSKSKPSGVKSRQSESLSKVAKMSSPPPKEEEEEEDESEDESEDDEQGAVCGACGDNYGTDEFWICCDACEKWFHGKCVKITPAKAEHIKHYKCPTCSNKRARP.

Positions 144-200 (SKDLSVNNNNSKSKPSGVKSRQSESLSKVAKMSSPPPKEEEEEEDESEDESEDDEQG) are disordered. Low complexity predominate over residues 146–163 (DLSVNNNNSKSKPSGVKS). A compositionally biased stretch (acidic residues) spans 182–199 (EEEEEEDESEDESEDDEQ). Residues 200 to 252 (GAVCGACGDNYGTDEFWICCDACEKWFHGKCVKITPAKAEHIKHYKCPTCSNK) form a PHD-type zinc finger.

This sequence belongs to the Alfin family. In terms of assembly, interacts with H3K4me3 and to a lesser extent with H3K4me2. As to expression, ubiquitously expressed.

The protein resides in the nucleus. Histone-binding component that specifically recognizes H3 tails trimethylated on 'Lys-4' (H3K4me3), which mark transcription start sites of virtually all active genes. This is PHD finger protein ALFIN-LIKE 6 (AL6) from Arabidopsis thaliana (Mouse-ear cress).